Here is a 709-residue protein sequence, read N- to C-terminus: Phosphomethylpyrimidine synthase (709 aa).

Over residues 1–13 (MNIRSNPDTTLPA) the composition is skewed to polar residues. Disordered regions lie at residues 1–21 (MNIR…PLPS) and 125–168 (DAPA…GREQ). Residues Asn-274, Met-303, Tyr-332, His-368, 388-390 (SRG), 429-432 (DGLR), and Glu-468 contribute to the substrate site. His-472 is a binding site for Zn(2+). Position 495 (Tyr-495) interacts with substrate. His-536 is a Zn(2+) binding site. [4Fe-4S] cluster is bound by residues Cys-616, Cys-619, and Cys-624.

It belongs to the ThiC family. As to quaternary structure, homodimer. The cofactor is [4Fe-4S] cluster.

The catalysed reaction is 5-amino-1-(5-phospho-beta-D-ribosyl)imidazole + S-adenosyl-L-methionine = 4-amino-2-methyl-5-(phosphooxymethyl)pyrimidine + CO + 5'-deoxyadenosine + formate + L-methionine + 3 H(+). It participates in cofactor biosynthesis; thiamine diphosphate biosynthesis. In terms of biological role, catalyzes the synthesis of the hydroxymethylpyrimidine phosphate (HMP-P) moiety of thiamine from aminoimidazole ribotide (AIR) in a radical S-adenosyl-L-methionine (SAM)-dependent reaction. The polypeptide is Phosphomethylpyrimidine synthase (Rhodopseudomonas palustris (strain BisB18)).